Reading from the N-terminus, the 642-residue chain is Threonine--tRNA ligase (642 aa).

One can recognise a TGS domain in the interval 1–61 (MPVITLPDGS…EHDAQIAIIT (61 aa)). The tract at residues 243-534 (DHRKIGKQLD…LTEEYAGFYP (292 aa)) is catalytic. Zn(2+) is bound by residues cysteine 334, histidine 385, and histidine 511.

Belongs to the class-II aminoacyl-tRNA synthetase family. In terms of assembly, homodimer. The cofactor is Zn(2+).

It is found in the cytoplasm. The catalysed reaction is tRNA(Thr) + L-threonine + ATP = L-threonyl-tRNA(Thr) + AMP + diphosphate + H(+). In terms of biological role, catalyzes the attachment of threonine to tRNA(Thr) in a two-step reaction: L-threonine is first activated by ATP to form Thr-AMP and then transferred to the acceptor end of tRNA(Thr). Also edits incorrectly charged L-seryl-tRNA(Thr). The polypeptide is Threonine--tRNA ligase (Sodalis glossinidius (strain morsitans)).